A 101-amino-acid polypeptide reads, in one-letter code: NADH-quinone oxidoreductase subunit K (101 aa).

The next 3 helical transmembrane spans lie at 4-24 (LGHMLALGAVLFAISLAGIFL), 30-50 (IVLLMSIELMLLSVNINFVGF), and 62-82 (FVFFILTVAAAEAAIGLAILV).

The protein belongs to the complex I subunit 4L family. In terms of assembly, NDH-1 is composed of 14 different subunits. Subunits NuoA, H, J, K, L, M, N constitute the membrane sector of the complex.

It is found in the cell inner membrane. The enzyme catalyses a quinone + NADH + 5 H(+)(in) = a quinol + NAD(+) + 4 H(+)(out). Functionally, NDH-1 shuttles electrons from NADH, via FMN and iron-sulfur (Fe-S) centers, to quinones in the respiratory chain. The immediate electron acceptor for the enzyme in this species is believed to be ubiquinone. Couples the redox reaction to proton translocation (for every two electrons transferred, four hydrogen ions are translocated across the cytoplasmic membrane), and thus conserves the redox energy in a proton gradient. This chain is NADH-quinone oxidoreductase subunit K, found in Stenotrophomonas maltophilia (strain K279a).